A 148-amino-acid chain; its full sequence is Transcription antitermination protein NusB (148 aa).

It belongs to the NusB family.

Involved in transcription antitermination. Required for transcription of ribosomal RNA (rRNA) genes. Binds specifically to the boxA antiterminator sequence of the ribosomal RNA (rrn) operons. This Nitrosococcus oceani (strain ATCC 19707 / BCRC 17464 / JCM 30415 / NCIMB 11848 / C-107) protein is Transcription antitermination protein NusB.